The following is a 401-amino-acid chain: Argininosuccinate synthase (401 aa).

8–16 (AYSGGLDTS) serves as a coordination point for ATP. Y85 is an L-citrulline binding site. An ATP-binding site is contributed by G115. Residues T117, N121, and D122 each contribute to the L-aspartate site. N121 is a binding site for L-citrulline. L-citrulline is bound by residues R125, S173, E258, and Y270.

Belongs to the argininosuccinate synthase family. Type 1 subfamily. As to quaternary structure, homotetramer.

It localises to the cytoplasm. It carries out the reaction L-citrulline + L-aspartate + ATP = 2-(N(omega)-L-arginino)succinate + AMP + diphosphate + H(+). Its pathway is amino-acid biosynthesis; L-arginine biosynthesis; L-arginine from L-ornithine and carbamoyl phosphate: step 2/3. This is Argininosuccinate synthase from Staphylococcus aureus (strain Mu3 / ATCC 700698).